The primary structure comprises 327 residues: Tartrate-resistant acid phosphatase type 5 (327 aa).

A signal peptide spans 1-22 (MDSWVVLLGLQIIWLPLLTHGT). Residues Asp-35, Asp-73, Tyr-76, and Asn-112 each contribute to the Fe cation site. 2 N-linked (GlcNAc...) asparagine glycosylation sites follow: Asn-118 and Asn-149. Cys-163 and Cys-221 are joined by a disulfide. 3 residues coordinate Fe cation: His-207, His-242, and His-244.

In terms of assembly, exists either as monomer or, after proteolytic processing, as a dimer of two chains linked by disulfide bond(s). The cofactor is Fe cation. In terms of tissue distribution, characteristic constituent of osteoclasts.

The protein localises to the lysosome. The catalysed reaction is a phosphate monoester + H2O = an alcohol + phosphate. May play a role in the process of bone resorption. The osteoclastic trap acts on nucleotide tri- and diphosphates with higher affinity, compared with other substrates. The protein is Tartrate-resistant acid phosphatase type 5 (Acp5) of Mus musculus (Mouse).